The primary structure comprises 558 residues: MTQWAMTESLEDRRRLVRVARGLEEGDLLVRGARVAQPVTREILEADVLIADGRVAVLGGTGDGLQAARVVEARGAFLAPGFIDGHVHIESSLLTPAGFARAVLLRGTTGVVAEPHEVVNVLGPQGLEWMLEAGRRSGLRVWASAPSCAPASGFEAGGARVGTAEVRQMLGQPGVLGLAEMMNYPGVLGGDEEVWAVIQAGRATGRRLDGHAAGVRGRDLQAYAAAGLHSDHEATTPEEARERLRAGLWLMVREGSAARNLQALLPVLRERPRRAMLVSDDVSVDELLELGHLDRLLRACVAGGLDPLDALALVTCNPAEYWGLHDVGLIAPGHLADFVLLRDLQSFEVLETFVGGAEAQPGELTPPLSGGGVHLGQGWDAATFEVPPGWPVLGIHAEQITTSREPEGSGDARLIVADRYGRGEWSACWTAGSGLTGGTLGISVLHDAHHAAFLGGSDTDVRMAGRALEALGGGLVVVSDGEVRASLPLPFAGLMTGEAPQEAAAGLARVTAATRALGCTLPYPVTTLSFLGLTVIPSLKLTPRGLLDVEAWQLVPSR.

The protein belongs to the metallo-dependent hydrolases superfamily. Adenine deaminase family. It depends on Mn(2+) as a cofactor.

It catalyses the reaction adenine + H2O + H(+) = hypoxanthine + NH4(+). This chain is Adenine deaminase, found in Deinococcus deserti (strain DSM 17065 / CIP 109153 / LMG 22923 / VCD115).